The chain runs to 648 residues: Transcription initiation factor TFIID subunit 5 (648 aa).

Residues 1-13 (MDSENSSSHSISS) show a composition bias toward low complexity. The disordered stretch occupies residues 1–21 (MDSENSSSHSISSPQMFQNTH). The LisH domain maps to 35-67 (MNNESLQMIIGYLRRNGLTETEELLTREAGPVL). WD repeat units lie at residues 317 to 358 (NAPI…KKLR), 392 to 431 (GHGGPVFSVNFSPDRRLLISSAGDRTVRLWSMETQRNAVI), 433 to 472 (RTPAVVWQAQFCSRGYYFATASADKTAAMWSTDRMHPLRI), 475 to 514 (DPYGDVGCIDYHPNCNYIAGGSDDRYVRVWDVCSGTRVRI), 517 to 556 (GHKASIIAVKFSPCGRYIVSLDAIGNLMIWDLAYQRLVAA), and 560 to 599 (EQAGTKGSITFSRDGGVFAVSHGNSSIQLYSLDTLIGTVL).

The protein belongs to the WD repeat TAF5 family. In terms of assembly, component of the TFIID basal transcription factor complex, composed of TATA-box-binding protein tbp-1, and a number of TBP-associated factors (TAFs).

It is found in the nucleus. In terms of biological role, the TFIID basal transcription factor complex plays a major role in the initiation of RNA polymerase II (Pol II)-dependent transcription. TFIID recognizes and binds promoters via its subunit tbp-1, a TATA-box-binding protein, and promotes assembly of the pre-initiation complex (PIC). The TFIID complex consists of tbp-1 and TBP-associated factors (TAFs), including taf-5. Essential for early embryonic development, but not required for transcription of some genes; probably acts via activating transcription initiation by RNA Pol II, as part of the TFIID complex. This chain is Transcription initiation factor TFIID subunit 5, found in Caenorhabditis elegans.